The sequence spans 277 residues: MPELPEVETVRRSLAGRITGLTIEKVELRLPKIAFALPGTLFTDALRGRRIIELGRRGKYLLLHLDGDETLVIHLRMTGRLIHLRPEEREEPEAAHTHAVFFLDDGSLLRYTDVRQFGTLTLMTREAALRQPGKGRLGPEPLGQDFSFVDFRNALVKRKTKLKPLLLDQSFLAGLGNIYADEALARARLHPDRTADSLDDEESRRLYDCIRTVLQEGIDAKGTSFRDYVDGEGRKGEFQEKLWVYGRGGNPCRRCGGEILREKRAGRSTHFCPRCQK.

The Schiff-base intermediate with DNA role is filled by Pro-2. Catalysis depends on Glu-3, which acts as the Proton donor. Lys-59 acts as the Proton donor; for beta-elimination activity in catalysis. DNA contacts are provided by His-96, Arg-115, and Arg-158. The segment at 243-277 (WVYGRGGNPCRRCGGEILREKRAGRSTHFCPRCQK) adopts an FPG-type zinc-finger fold. Arg-267 serves as the catalytic Proton donor; for delta-elimination activity.

Belongs to the FPG family. As to quaternary structure, monomer. Zn(2+) is required as a cofactor.

It carries out the reaction Hydrolysis of DNA containing ring-opened 7-methylguanine residues, releasing 2,6-diamino-4-hydroxy-5-(N-methyl)formamidopyrimidine.. The enzyme catalyses 2'-deoxyribonucleotide-(2'-deoxyribose 5'-phosphate)-2'-deoxyribonucleotide-DNA = a 3'-end 2'-deoxyribonucleotide-(2,3-dehydro-2,3-deoxyribose 5'-phosphate)-DNA + a 5'-end 5'-phospho-2'-deoxyribonucleoside-DNA + H(+). In terms of biological role, involved in base excision repair of DNA damaged by oxidation or by mutagenic agents. Acts as a DNA glycosylase that recognizes and removes damaged bases. Has a preference for oxidized purines, such as 7,8-dihydro-8-oxoguanine (8-oxoG). Has AP (apurinic/apyrimidinic) lyase activity and introduces nicks in the DNA strand. Cleaves the DNA backbone by beta-delta elimination to generate a single-strand break at the site of the removed base with both 3'- and 5'-phosphates. The chain is Formamidopyrimidine-DNA glycosylase from Heliobacterium modesticaldum (strain ATCC 51547 / Ice1).